A 464-amino-acid chain; its full sequence is Argininosuccinate lyase (464 aa).

Belongs to the lyase 1 family. Argininosuccinate lyase subfamily.

Its subcellular location is the cytoplasm. It catalyses the reaction 2-(N(omega)-L-arginino)succinate = fumarate + L-arginine. The protein operates within amino-acid biosynthesis; L-arginine biosynthesis; L-arginine from L-ornithine and carbamoyl phosphate: step 3/3. This chain is Argininosuccinate lyase, found in Ectopseudomonas mendocina (strain ymp) (Pseudomonas mendocina).